A 294-amino-acid chain; its full sequence is Acetylglutamate kinase (294 aa).

Residues 69–70 (GG), Arg91, and Asn190 each bind substrate.

Belongs to the acetylglutamate kinase family. ArgB subfamily.

Its subcellular location is the cytoplasm. The enzyme catalyses N-acetyl-L-glutamate + ATP = N-acetyl-L-glutamyl 5-phosphate + ADP. It functions in the pathway amino-acid biosynthesis; L-arginine biosynthesis; N(2)-acetyl-L-ornithine from L-glutamate: step 2/4. Functionally, catalyzes the ATP-dependent phosphorylation of N-acetyl-L-glutamate. This Mycobacterium bovis (strain ATCC BAA-935 / AF2122/97) protein is Acetylglutamate kinase.